A 271-amino-acid polypeptide reads, in one-letter code: Type II restriction enzyme ScrFI (271 aa).

The enzyme catalyses Endonucleolytic cleavage of DNA to give specific double-stranded fragments with terminal 5'-phosphates.. Functionally, a P subtype restriction enzyme that recognizes the double-stranded sequence 5'-CCNGG-3' and cleaves after C-2. The protein is Type II restriction enzyme ScrFI of Lactococcus lactis subsp. cremoris (Streptococcus cremoris).